A 784-amino-acid chain; its full sequence is E3 UFM1-protein ligase 1 homolog (784 aa).

The segment at 401–481 (QKGNSSAQDL…GGGGGGNKKT (81 aa)) is disordered.

Belongs to the UFL1 family.

E3 UFM1-protein ligase that mediates ufmylation of target proteins. This is E3 UFM1-protein ligase 1 homolog from Drosophila ananassae (Fruit fly).